The chain runs to 450 residues: uncharacterized protein (450 aa).

Belongs to the herpesviridae BBLF2 family.

This is an uncharacterized protein from Saimiriine herpesvirus 2 (strain 11) (SaHV-2).